A 227-amino-acid polypeptide reads, in one-letter code: Cytochrome c oxidase subunit 2 (227 aa).

At 1–14 (MAYPLQLGLQDATS) the chain is on the mitochondrial intermembrane side. Residues 15 to 45 (PIMEELMNFHDHTLMIVFLISSLVLYIISLM) form a helical membrane-spanning segment. At 46–59 (LTTKLTHTSTMDAQ) the chain is on the mitochondrial matrix side. Residues 60-87 (EVETIWTILPAVILIMIALPSLRILYMM) traverse the membrane as a helical segment. The Mitochondrial intermembrane portion of the chain corresponds to 88–227 (DEINNPVLTV…HFENWSASMI (140 aa)). Residues histidine 161, cysteine 196, glutamate 198, cysteine 200, histidine 204, and methionine 207 each contribute to the Cu cation site. Glutamate 198 contributes to the Mg(2+) binding site.

This sequence belongs to the cytochrome c oxidase subunit 2 family. Component of the cytochrome c oxidase (complex IV, CIV), a multisubunit enzyme composed of 14 subunits. The complex is composed of a catalytic core of 3 subunits MT-CO1, MT-CO2 and MT-CO3, encoded in the mitochondrial DNA, and 11 supernumerary subunits COX4I, COX5A, COX5B, COX6A, COX6B, COX6C, COX7A, COX7B, COX7C, COX8 and NDUFA4, which are encoded in the nuclear genome. The complex exists as a monomer or a dimer and forms supercomplexes (SCs) in the inner mitochondrial membrane with NADH-ubiquinone oxidoreductase (complex I, CI) and ubiquinol-cytochrome c oxidoreductase (cytochrome b-c1 complex, complex III, CIII), resulting in different assemblies (supercomplex SCI(1)III(2)IV(1) and megacomplex MCI(2)III(2)IV(2)). Found in a complex with TMEM177, COA6, COX18, COX20, SCO1 and SCO2. Interacts with TMEM177 in a COX20-dependent manner. Interacts with COX20. Interacts with COX16. Cu cation serves as cofactor.

The protein resides in the mitochondrion inner membrane. The catalysed reaction is 4 Fe(II)-[cytochrome c] + O2 + 8 H(+)(in) = 4 Fe(III)-[cytochrome c] + 2 H2O + 4 H(+)(out). Component of the cytochrome c oxidase, the last enzyme in the mitochondrial electron transport chain which drives oxidative phosphorylation. The respiratory chain contains 3 multisubunit complexes succinate dehydrogenase (complex II, CII), ubiquinol-cytochrome c oxidoreductase (cytochrome b-c1 complex, complex III, CIII) and cytochrome c oxidase (complex IV, CIV), that cooperate to transfer electrons derived from NADH and succinate to molecular oxygen, creating an electrochemical gradient over the inner membrane that drives transmembrane transport and the ATP synthase. Cytochrome c oxidase is the component of the respiratory chain that catalyzes the reduction of oxygen to water. Electrons originating from reduced cytochrome c in the intermembrane space (IMS) are transferred via the dinuclear copper A center (CU(A)) of subunit 2 and heme A of subunit 1 to the active site in subunit 1, a binuclear center (BNC) formed by heme A3 and copper B (CU(B)). The BNC reduces molecular oxygen to 2 water molecules using 4 electrons from cytochrome c in the IMS and 4 protons from the mitochondrial matrix. The chain is Cytochrome c oxidase subunit 2 (MT-CO2) from Zelotomys hildegardeae (Hildegarde's broad-headed mouse).